Consider the following 312-residue polypeptide: Cytochrome c biogenesis protein CcsA (312 aa).

8 helical membrane passes run 12-32, 47-67, 72-92, 98-118, 144-164, 220-240, 254-271, and 281-301; these read NLVF…LSFF, IVAN…AGYF, LYES…YVEF, LVGA…NLTL, MMLS…FLVI, IIGL…VWAN, TWAL…HSRI, and AILG…VNFL.

The protein belongs to the CcmF/CycK/Ccl1/NrfE/CcsA family. In terms of assembly, may interact with Ccs1.

The protein localises to the plastid. The protein resides in the chloroplast thylakoid membrane. Its function is as follows. Required during biogenesis of c-type cytochromes (cytochrome c6 and cytochrome f) at the step of heme attachment. The chain is Cytochrome c biogenesis protein CcsA from Trieres chinensis (Marine centric diatom).